A 122-amino-acid chain; its full sequence is Acidic phospholipase A2 (122 aa).

Intrachain disulfides connect cysteine 26–cysteine 115, cysteine 28–cysteine 44, cysteine 43–cysteine 95, cysteine 49–cysteine 122, cysteine 50–cysteine 88, cysteine 57–cysteine 81, and cysteine 75–cysteine 86. Ca(2+) is bound by residues tyrosine 27, glycine 29, and glycine 31. The active site involves histidine 47. Aspartate 48 contacts Ca(2+). Residue aspartate 89 is part of the active site.

Requires Ca(2+) as cofactor. Expressed by the venom gland.

Its subcellular location is the secreted. It carries out the reaction a 1,2-diacyl-sn-glycero-3-phosphocholine + H2O = a 1-acyl-sn-glycero-3-phosphocholine + a fatty acid + H(+). Functionally, PLA2 catalyzes the calcium-dependent hydrolysis of the 2-acyl groups in 3-sn-phosphoglycerides. This is Acidic phospholipase A2 from Lachesis stenophrys (Central American bushmaster).